Here is a 181-residue protein sequence, read N- to C-terminus: Ninjurin-B (181 aa).

Residues 1-10 are compositionally biased toward basic and acidic residues; sequence MDSGEVKISL. Residues 1–72 form a disordered region; it reads MDSGEVKISL…SNKKCSSDLS (72 aa). The Extracellular segment spans residues 1–115; it reads MDSGEVKISL…YNDKASTYIY (115 aa). The segment covering 12 to 26 has biased composition (polar residues); it reads DSPSSGESFASTTSG. Residues 33 to 49 are compositionally biased toward basic and acidic residues; the sequence is RDLDIQVHESHIKDDQF. A helix alpha1 region spans residues 80 to 91; the sequence is NKNVAEGLMDIA. Positions 94-110 are helix alpha2; sequence SANANQLRFLITYNDKA. A helical transmembrane segment spans residues 116–136; it reads SMIMVILSLVLQLLVGIMLIF. Topologically, residues 137-153 are cytoplasmic; that stretch reads KRRLKRFRNRSYERTND. The chain crosses the membrane as a helical span at residues 154–174; that stretch reads LLVMGVFMITVINILLAAFTT. Residues 175–181 are Extracellular-facing; the sequence is TDGGGSH.

It belongs to the ninjurin family.

Its subcellular location is the membrane. Its function is as follows. Effector of non-apoptotic necrotic cell death that mediates plasma membrane rupture (cytolysis): oligomerizes in response to death stimuli and promotes plasma membrane rupture by introducing hydrophilic faces of 2 alpha helices into the hydrophobic membrane, leading to release intracellular molecules that propagate the inflammatory response. Also acts as a homophilic transmembrane adhesion molecule that promotes cell adhesion by mediating homophilic interactions via its extracellular region. The polypeptide is Ninjurin-B (Drosophila melanogaster (Fruit fly)).